A 372-amino-acid chain; its full sequence is 3-dehydroquinate synthase (372 aa).

NAD(+) contacts are provided by residues 113 to 117, 137 to 138, Lys-150, Lys-159, and 177 to 180; these read GVIGD, TS, and TLKT. Residues Glu-192, His-257, and His-274 each coordinate Zn(2+).

It belongs to the sugar phosphate cyclases superfamily. Dehydroquinate synthase family. The cofactor is Co(2+). Zn(2+) serves as cofactor. Requires NAD(+) as cofactor.

The protein resides in the cytoplasm. The enzyme catalyses 7-phospho-2-dehydro-3-deoxy-D-arabino-heptonate = 3-dehydroquinate + phosphate. It participates in metabolic intermediate biosynthesis; chorismate biosynthesis; chorismate from D-erythrose 4-phosphate and phosphoenolpyruvate: step 2/7. Functionally, catalyzes the conversion of 3-deoxy-D-arabino-heptulosonate 7-phosphate (DAHP) to dehydroquinate (DHQ). In Acaryochloris marina (strain MBIC 11017), this protein is 3-dehydroquinate synthase.